We begin with the raw amino-acid sequence, 260 residues long: Small ribosomal subunit protein uS3 (260 aa).

Residues 39–114 (LRQYIEQKLG…QIRINVVEVQ (76 aa)) enclose the KH type-2 domain. Positions 217-260 (GQEPDPLPPASRDRERDPRDRDREPRRRQQQRRRQQFEDRSNEG) are disordered. Composition is skewed to basic and acidic residues over residues 227–243 (SRDRERDPRDRDREPRR) and 251–260 (QQFEDRSNEG).

It belongs to the universal ribosomal protein uS3 family. As to quaternary structure, part of the 30S ribosomal subunit. Forms a tight complex with proteins S10 and S14.

Its function is as follows. Binds the lower part of the 30S subunit head. Binds mRNA in the 70S ribosome, positioning it for translation. The polypeptide is Small ribosomal subunit protein uS3 (Nostoc punctiforme (strain ATCC 29133 / PCC 73102)).